A 261-amino-acid polypeptide reads, in one-letter code: Intermembrane phospholipid transport system permease protein MlaE (261 aa).

Residues Met1–Gln12 lie on the Cytoplasmic side of the membrane. Residues Val13–Gly33 form a helical membrane-spanning segment. Topologically, residues Lys34–His49 are periplasmic. A helical membrane pass occupies residues Val50–Leu70. Residues Gly71–Arg147 lie on the Cytoplasmic side of the membrane. Residues Phe148–Trp168 form a helical membrane-spanning segment. The Periplasmic segment spans residues Gly169–Asp198. A helical membrane pass occupies residues Ile199–Phe219. Topologically, residues Asn220–Thr238 are cytoplasmic. The helical transmembrane segment at Val239–Gly259 threads the bilayer. Over Ala260–Gly261 the chain is Periplasmic.

Belongs to the MlaE permease family. As to quaternary structure, the complex is composed of two ATP-binding proteins (MlaF), two transmembrane proteins (MlaE), two cytoplasmic solute-binding proteins (MlaB) and six periplasmic solute-binding proteins (MlaD).

It is found in the cell inner membrane. Functionally, part of the ABC transporter complex MlaFEDB, which is involved in a phospholipid transport pathway that maintains lipid asymmetry in the outer membrane by retrograde trafficking of phospholipids from the outer membrane to the inner membrane. Probably responsible for the translocation of the substrate across the membrane. In Haemophilus influenzae (strain ATCC 51907 / DSM 11121 / KW20 / Rd), this protein is Intermembrane phospholipid transport system permease protein MlaE.